The chain runs to 291 residues: ADP-dependent (S)-NAD(P)H-hydrate dehydratase (291 aa).

Residues 5–273 (SKDILEEVIT…QALPTYMKKY (269 aa)) enclose the YjeF C-terminal domain. 3 residues coordinate (6S)-NADPHX: Ala-40, Gly-103, and His-153. Gly-215 lines the AMP pocket. Asp-216 serves as a coordination point for (6S)-NADPHX.

It belongs to the NnrD/CARKD family. As to quaternary structure, homotetramer. Mg(2+) is required as a cofactor.

The catalysed reaction is (6S)-NADHX + ADP = AMP + phosphate + NADH + H(+). It catalyses the reaction (6S)-NADPHX + ADP = AMP + phosphate + NADPH + H(+). Its function is as follows. Catalyzes the dehydration of the S-form of NAD(P)HX at the expense of ADP, which is converted to AMP. Together with NAD(P)HX epimerase, which catalyzes the epimerization of the S- and R-forms, the enzyme allows the repair of both epimers of NAD(P)HX, a damaged form of NAD(P)H that is a result of enzymatic or heat-dependent hydration. The sequence is that of ADP-dependent (S)-NAD(P)H-hydrate dehydratase from Enterococcus faecalis (strain ATCC 700802 / V583).